The sequence spans 380 residues: E3 ubiquitin-protein ligase PHF7 (380 aa).

The interval 1-23 (MRTIKEKKEHPRLRKTARTKKVT) is disordered. Residues 10–23 (HPRLRKTARTKKVT) show a composition bias toward basic residues. The segment at 30 to 68 (GPVCLLCFQEPGDPEKLGEFLQKDNLCVHYFCLILSSKL) adopts a C2HC pre-PHD-type zinc-finger fold. 4 residues coordinate Zn(2+): Cys-33, Cys-36, His-58, and Cys-61. Positions 67 to 92 (KLPQKGQPNRGLHGFMPEDIKKEAAR) are required for interaction and ubiquitination of the nucleosome core particle. Residues 96-145 (KVCFVCKRKGAAIRCQKDQCVQNFHLPCGQERGCLSQFFGEYKSYCGKHR) form a PHD-type zinc finger. Cys-98, Cys-101, Cys-110, Cys-115, His-120, Cys-123, Cys-141, His-144, Cys-159, Cys-162, Cys-178, Cys-179, His-185, Cys-188, Cys-203, Cys-206, Cys-247, Cys-252, Cys-272, Cys-275, His-281, Cys-284, Cys-296, and Cys-299 together coordinate Zn(2+). The tract at residues 150-306 (IHQRSFGESC…NECLPASTED (157 aa)) is required for interaction with ubiquitinated UBE2D2. The RING-type; degenerate zinc finger occupies 159–207 (CVLCCEDLSRASVENIRSPCCSQAIYHRKCIQKYAHTSAKHFFKCPQCN). A required for association with and ubiquitination of H3 region spans residues 243-300 (RYQHCDAPICLYEQGRDSFEDEGRWRLILCATCGSHGTHRDCSSLRPNSKKWECNECL). Positions 352–367 (EKPESSSGSSCQSWRS) are enriched in low complexity. A disordered region spans residues 352 to 380 (EKPESSSGSSCQSWRSKGIKVTKDCKKSK).

In terms of assembly, interacts with MEF2C; the interaction promotes MEF2C binding to its transcription targets. Interacts with GATA4; the interaction promotes GATA4 binding to its transcription targets. Interacts with UBE2D2; the interaction inhibits cleavage of PHF7 and promotes association of the complex with the nucleosome core particle.

Its subcellular location is the nucleus. The enzyme catalyses S-ubiquitinyl-[E2 ubiquitin-conjugating enzyme]-L-cysteine + [acceptor protein]-L-lysine = [E2 ubiquitin-conjugating enzyme]-L-cysteine + N(6)-ubiquitinyl-[acceptor protein]-L-lysine.. It participates in protein modification; protein ubiquitination. Its function is as follows. E3 ubiquitin-protein ligase which ubiquitinates histone H3 at 'Lys-14'. Required for male fertility, via inhibition of SPOP-mediated BRDT degradation when in the presence of acetylated histone H4 in early condensing spermatids. Stabilization of BRDT allows it to facilitate histone removal in early condensing spermatids and promote the progression of histone-to-protamine exchange. Promotes the expression of steroidogenesis proteins in the testes, and as a result plays a role in maintaining testosterone levels and repressing osteoclastogenesis. Promotes transcription of cardiac enhancer genes by facilitating binding of cardiac transcription factors such as MEF2C and GATA4 to target gene promoters. Ubiquitinates histone H4. Ubiquitinates histone H2A and H3 as part of the nucleosome core particle. The sequence is that of E3 ubiquitin-protein ligase PHF7 from Rattus norvegicus (Rat).